Reading from the N-terminus, the 569-residue chain is Urease subunit alpha (569 aa).

The region spanning 131–569 (GAIDSHIHFI…LPLAQRYLLL (439 aa)) is the Urease domain. The Ni(2+) site is built by His-136, His-138, and Lys-219. Lys-219 carries the post-translational modification N6-carboxylysine. His-221 lines the substrate pocket. Residues His-248 and His-274 each contribute to the Ni(2+) site. The active-site Proton donor is His-322. Ni(2+) is bound at residue Asp-362.

This sequence belongs to the metallo-dependent hydrolases superfamily. Urease alpha subunit family. As to quaternary structure, heterotrimer of UreA (gamma), UreB (beta) and UreC (alpha) subunits. Three heterotrimers associate to form the active enzyme. The cofactor is Ni cation. Post-translationally, carboxylation allows a single lysine to coordinate two nickel ions.

It is found in the cytoplasm. It carries out the reaction urea + 2 H2O + H(+) = hydrogencarbonate + 2 NH4(+). Its pathway is nitrogen metabolism; urea degradation; CO(2) and NH(3) from urea (urease route): step 1/1. The polypeptide is Urease subunit alpha (Prochlorococcus marinus (strain NATL2A)).